Consider the following 271-residue polypeptide: Uridine-cytidine kinase 1-A (271 aa).

G24–T32 serves as a coordination point for ATP. Substrate contacts are provided by D81, Y109, H114, R163, R172, and Q180. Position 209 (D209) interacts with ATP. Residues S241 to H271 form a disordered region. The span at T262 to H271 shows a compositional bias: basic and acidic residues.

The protein belongs to the uridine kinase family.

The catalysed reaction is uridine + ATP = UMP + ADP + H(+). The enzyme catalyses cytidine + ATP = CMP + ADP + H(+). It functions in the pathway pyrimidine metabolism; CTP biosynthesis via salvage pathway; CTP from cytidine: step 1/3. Its pathway is pyrimidine metabolism; UMP biosynthesis via salvage pathway; UMP from uridine: step 1/1. In terms of biological role, phosphorylates uridine and cytidine to uridine monophosphate and cytidine monophosphate. Does not phosphorylate deoxyribonucleosides or purine ribonucleosides. Can use ATP or GTP as a phosphate donor. This Xenopus laevis (African clawed frog) protein is Uridine-cytidine kinase 1-A (uck1-a).